Reading from the N-terminus, the 883-residue chain is Phosphoenolpyruvate carboxylase (883 aa).

Residues histidine 138 and lysine 546 contribute to the active site.

This sequence belongs to the PEPCase type 1 family. Mg(2+) is required as a cofactor.

It carries out the reaction oxaloacetate + phosphate = phosphoenolpyruvate + hydrogencarbonate. Functionally, forms oxaloacetate, a four-carbon dicarboxylic acid source for the tricarboxylic acid cycle. This is Phosphoenolpyruvate carboxylase from Escherichia coli O7:K1 (strain IAI39 / ExPEC).